A 171-amino-acid polypeptide reads, in one-letter code: Lipoprotein signal peptidase (171 aa).

The next 3 membrane-spanning stretches (helical) occupy residues 12-32 (WYWV…WVLA), 67-87 (WQRW…TVWL), and 93-113 (SLLK…GNLV). Active-site residues include Asp123 and Asp141. The chain crosses the membrane as a helical span at residues 137–157 (FNIADSAICIGAVLIIWDAFL).

It belongs to the peptidase A8 family.

It is found in the cell inner membrane. It carries out the reaction Release of signal peptides from bacterial membrane prolipoproteins. Hydrolyzes -Xaa-Yaa-Zaa-|-(S,diacylglyceryl)Cys-, in which Xaa is hydrophobic (preferably Leu), and Yaa (Ala or Ser) and Zaa (Gly or Ala) have small, neutral side chains.. The protein operates within protein modification; lipoprotein biosynthesis (signal peptide cleavage). This protein specifically catalyzes the removal of signal peptides from prolipoproteins. This chain is Lipoprotein signal peptidase, found in Shewanella baltica (strain OS195).